The primary structure comprises 520 residues: Probable cytosol aminopeptidase (520 aa).

Mn(2+) is bound by residues K232 and D237. The active site involves K244. The Mn(2+) site is built by D255, D314, and E316. R318 is a catalytic residue. A disordered region spans residues 488–520; the sequence is KAKKSTAKKATTKKTTTRKTASKTKSTKSKARK.

This sequence belongs to the peptidase M17 family. Mn(2+) serves as cofactor.

The protein localises to the cytoplasm. The catalysed reaction is Release of an N-terminal amino acid, Xaa-|-Yaa-, in which Xaa is preferably Leu, but may be other amino acids including Pro although not Arg or Lys, and Yaa may be Pro. Amino acid amides and methyl esters are also readily hydrolyzed, but rates on arylamides are exceedingly low.. The enzyme catalyses Release of an N-terminal amino acid, preferentially leucine, but not glutamic or aspartic acids.. In terms of biological role, presumably involved in the processing and regular turnover of intracellular proteins. Catalyzes the removal of unsubstituted N-terminal amino acids from various peptides. This chain is Probable cytosol aminopeptidase (pepA), found in Metamycoplasma salivarium (Mycoplasma salivarium).